The sequence spans 631 residues: Pescadillo homolog (631 aa).

Residues 321 to 414 enclose the BRCT domain; it reads RLRNLFKGLK…QLLPTNKYFL (94 aa). Disordered stretches follow at residues 450 to 469 and 489 to 569; these read HAQS…EDDT and EYKK…MVKP. Residues serine 453 and serine 457 each carry the phosphoserine modification. Acidic residues-rich tracts occupy residues 454 to 469 and 499 to 524; these read DDES…EDDT and VNED…EELD. The stretch at 510–541 forms a coiled coil; the sequence is FDGEQESDEEEEELDEKTKRLQEEKKKMSVQS. Basic and acidic residues predominate over residues 525 to 536; it reads EKTKRLQEEKKK. A compositionally biased stretch (basic residues) spans 543–552; that stretch reads KVHKVNKRQL. Basic and acidic residues predominate over residues 553-562; it reads HKAEVDEHRL.

The protein belongs to the pescadillo family.

It localises to the nucleus. The protein resides in the nucleolus. Its subcellular location is the nucleoplasm. Required for maturation of ribosomal RNAs and formation of the large ribosomal subunit. In Drosophila mojavensis (Fruit fly), this protein is Pescadillo homolog.